A 173-amino-acid polypeptide reads, in one-letter code: S-ribosylhomocysteine lyase (173 aa).

Fe cation contacts are provided by H54, H58, and C128.

It belongs to the LuxS family. Homodimer. Fe cation is required as a cofactor.

It carries out the reaction S-(5-deoxy-D-ribos-5-yl)-L-homocysteine = (S)-4,5-dihydroxypentane-2,3-dione + L-homocysteine. In terms of biological role, involved in the synthesis of autoinducer 2 (AI-2) which is secreted by bacteria and is used to communicate both the cell density and the metabolic potential of the environment. The regulation of gene expression in response to changes in cell density is called quorum sensing. Catalyzes the transformation of S-ribosylhomocysteine (RHC) to homocysteine (HC) and 4,5-dihydroxy-2,3-pentadione (DPD). The protein is S-ribosylhomocysteine lyase of Hydrogenovibrio crunogenus (strain DSM 25203 / XCL-2) (Thiomicrospira crunogena).